Consider the following 487-residue polypeptide: Catalase (487 aa).

The tract at residues 1-20 (MSQRVLTTESGAPVADNQNS) is disordered. Catalysis depends on residues histidine 54 and asparagine 127. Tyrosine 337 serves as a coordination point for heme.

Belongs to the catalase family. Heme serves as cofactor.

It carries out the reaction 2 H2O2 = O2 + 2 H2O. Its function is as follows. Decomposes hydrogen peroxide into water and oxygen; serves to protect cells from the toxic effects of hydrogen peroxide. The sequence is that of Catalase (katA) from Streptomyces coelicolor (strain ATCC BAA-471 / A3(2) / M145).